The sequence spans 118 residues: Small ribosomal subunit protein bS6 (118 aa).

It belongs to the bacterial ribosomal protein bS6 family.

Functionally, binds together with bS18 to 16S ribosomal RNA. This is Small ribosomal subunit protein bS6 from Orientia tsutsugamushi (strain Ikeda) (Rickettsia tsutsugamushi).